We begin with the raw amino-acid sequence, 89 residues long: Acyl carrier protein MbtL (89 aa).

The Carrier domain occupies 7 to 82; sequence ESVSAALTEI…DLEAAIQAKV (76 aa). The residue at position 42 (S42) is an O-(pantetheine 4'-phosphoryl)serine.

Post-translationally, 4'-phosphopantetheine is transferred from CoA to a specific serine of apo-ACP, leading to the activated holo-ACP form.

It localises to the cytoplasm. It participates in siderophore biosynthesis; mycobactin biosynthesis. Functionally, acyl carrier protein involved in the formation of acyl-S-ACP intermediates within the mycobactin biosynthesis process. This Mycobacterium sp. (strain MCS) protein is Acyl carrier protein MbtL (mbtL).